Here is a 149-residue protein sequence, read N- to C-terminus: Protein SprT-like (149 aa).

The region spanning 6–147 (LQALVEQISI…VCGRCRSKLK (142 aa)) is the SprT-like domain. His-67 contributes to the Zn(2+) binding site. Glu-68 is an active-site residue. His-71 contributes to the Zn(2+) binding site.

The protein belongs to the SprT family. The cofactor is Zn(2+).

Its subcellular location is the cytoplasm. This chain is Protein SprT-like, found in Geobacillus kaustophilus (strain HTA426).